A 458-amino-acid chain; its full sequence is Monomethylamine methyltransferase MtmB1 (458 aa).

A non-standard amino acid (pyrrolysine) is located at residue Pyl202.

It belongs to the monomethylamine methyltransferase family. Can form a complex with MtmC.

It carries out the reaction Co(I)-[methylamine-specific corrinoid protein] + methylamine + H(+) = methyl-Co(III)-[methylamine-specific corrinoid protein] + NH4(+). It participates in one-carbon metabolism; methanogenesis from methylamine. Catalyzes the transfer of the methyl group from monomethylamine to the corrinoid cofactor of MtmC. The sequence is that of Monomethylamine methyltransferase MtmB1 (mtmB1) from Methanosarcina acetivorans (strain ATCC 35395 / DSM 2834 / JCM 12185 / C2A).